The sequence spans 113 residues: Small ribosomal subunit protein bS6 (113 aa).

The protein belongs to the bacterial ribosomal protein bS6 family.

Its function is as follows. Binds together with bS18 to 16S ribosomal RNA. In Synechocystis sp. (strain ATCC 27184 / PCC 6803 / Kazusa), this protein is Small ribosomal subunit protein bS6 (rpsF).